We begin with the raw amino-acid sequence, 292 residues long: Ventral anterior homeobox 2 (292 aa).

The span at 1–36 shows a compositional bias: basic and acidic residues; sequence MGDGGAERDRGPKRREEPGGRSGRHGEHRGAEDLRA. The disordered stretch occupies residues 1–74; it reads MGDGGAERDR…DGQQALGETD (74 aa). The segment at residues 102-161 is a DNA-binding region (homeobox); sequence PKRTRTSFTAEQLYRLEMEFQRCQYVVGRERTELARQLNLSETQVKVWFQNRRTKQKKDQ. The interval 207–242 is disordered; that stretch reads LPGLPASHRGTSLVDPRNSSPRLNPMPSASASSPLP.

The protein belongs to the EMX homeobox family. As to expression, expressed in the developing and mature retina.

It is found in the nucleus. Functionally, transcription factor that may function in dorsoventral specification of the forebrain. Regulates the expression of Wnt signaling antagonists including the expression of a truncated TCF7L2 isoform that cannot bind CTNNB1 and acts therefore as a potent dominant-negative Wnt antagonist. Plays a crucial role in eye development and, in particular, in the specification of the ventral optic vesicle. May be a regulator of axial polarization in the retina. The protein is Ventral anterior homeobox 2 (Vax2) of Mus musculus (Mouse).